Here is an 881-residue protein sequence, read N- to C-terminus: Phosphoenolpyruvate carboxylase (881 aa).

Catalysis depends on residues His-139 and Lys-544.

Belongs to the PEPCase type 1 family. Mg(2+) is required as a cofactor.

The enzyme catalyses oxaloacetate + phosphate = phosphoenolpyruvate + hydrogencarbonate. Functionally, forms oxaloacetate, a four-carbon dicarboxylic acid source for the tricarboxylic acid cycle. The protein is Phosphoenolpyruvate carboxylase of Marinobacter nauticus (strain ATCC 700491 / DSM 11845 / VT8) (Marinobacter aquaeolei).